We begin with the raw amino-acid sequence, 265 residues long: Orotidine 5'-phosphate decarboxylase (265 aa).

Substrate is bound by residues Asp38, Lys60–His62, Asp91–Thr100, Tyr213, and Arg232. Residue Lys93 is the Proton donor of the active site.

Belongs to the OMP decarboxylase family.

The catalysed reaction is orotidine 5'-phosphate + H(+) = UMP + CO2. Its pathway is pyrimidine metabolism; UMP biosynthesis via de novo pathway; UMP from orotate: step 2/2. The sequence is that of Orotidine 5'-phosphate decarboxylase (pyrG) from Rhizopus oryzae (Mucormycosis agent).